We begin with the raw amino-acid sequence, 136 residues long: Small ribosomal subunit protein eS6 (136 aa).

It belongs to the eukaryotic ribosomal protein eS6 family.

The protein is Small ribosomal subunit protein eS6 of Methanosarcina mazei (strain ATCC BAA-159 / DSM 3647 / Goe1 / Go1 / JCM 11833 / OCM 88) (Methanosarcina frisia).